A 92-amino-acid polypeptide reads, in one-letter code: MKQVIKAPLITEKNTYHNAAGVYVFEVDLKSSKTEVKAAVEKNFKVKVDSVRTSVCRGHSKQTKFGLTKVAYWKKAYVKLAEGEKIALFEGV.

This sequence belongs to the universal ribosomal protein uL23 family. Part of the 50S ribosomal subunit. Contacts protein L29, and trigger factor when it is bound to the ribosome.

Functionally, one of the early assembly proteins it binds 23S rRNA. One of the proteins that surrounds the polypeptide exit tunnel on the outside of the ribosome. Forms the main docking site for trigger factor binding to the ribosome. The chain is Large ribosomal subunit protein uL23 from Bdellovibrio bacteriovorus (strain ATCC 15356 / DSM 50701 / NCIMB 9529 / HD100).